The chain runs to 347 residues: NADH-quinone oxidoreductase subunit H 1 (347 aa).

9 consecutive transmembrane segments (helical) span residues 14-34 (IMIG…AYVL), 50-70 (PNVV…KFVF), 83-103 (IFLL…AVIP), 115-135 (VGIL…IMGG), 161-181 (IGFV…TDIV), 198-218 (FLDW…ISAL), 258-278 (AICL…LPPV), 286-306 (VPGI…FAMV), and 321-341 (LGWK…AFVL).

This sequence belongs to the complex I subunit 1 family. In terms of assembly, NDH-1 is composed of 14 different subunits. Subunits NuoA, H, J, K, L, M, N constitute the membrane sector of the complex.

It localises to the cell inner membrane. The enzyme catalyses a quinone + NADH + 5 H(+)(in) = a quinol + NAD(+) + 4 H(+)(out). Its function is as follows. NDH-1 shuttles electrons from NADH, via FMN and iron-sulfur (Fe-S) centers, to quinones in the respiratory chain. The immediate electron acceptor for the enzyme in this species is believed to be ubiquinone. Couples the redox reaction to proton translocation (for every two electrons transferred, four hydrogen ions are translocated across the cytoplasmic membrane), and thus conserves the redox energy in a proton gradient. This subunit may bind ubiquinone. The sequence is that of NADH-quinone oxidoreductase subunit H 1 from Rhizobium meliloti (strain 1021) (Ensifer meliloti).